Here is a 150-residue protein sequence, read N- to C-terminus: Deoxyuridine 5'-triphosphate nucleotidohydrolase (150 aa).

Substrate-binding positions include 69-71 (RSG), Asn82, 86-88 (LID), and Met96.

The protein belongs to the dUTPase family. Requires Mg(2+) as cofactor.

It carries out the reaction dUTP + H2O = dUMP + diphosphate + H(+). It participates in pyrimidine metabolism; dUMP biosynthesis; dUMP from dCTP (dUTP route): step 2/2. Its function is as follows. This enzyme is involved in nucleotide metabolism: it produces dUMP, the immediate precursor of thymidine nucleotides and it decreases the intracellular concentration of dUTP so that uracil cannot be incorporated into DNA. The chain is Deoxyuridine 5'-triphosphate nucleotidohydrolase from Leptothrix cholodnii (strain ATCC 51168 / LMG 8142 / SP-6) (Leptothrix discophora (strain SP-6)).